The chain runs to 208 residues: Large ribosomal subunit protein bL25 (208 aa).

Belongs to the bacterial ribosomal protein bL25 family. CTC subfamily. Part of the 50S ribosomal subunit; part of the 5S rRNA/L5/L18/L25 subcomplex. Contacts the 5S rRNA. Binds to the 5S rRNA independently of L5 and L18.

Its function is as follows. This is one of the proteins that binds to the 5S RNA in the ribosome where it forms part of the central protuberance. The sequence is that of Large ribosomal subunit protein bL25 from Paracoccus denitrificans (strain Pd 1222).